We begin with the raw amino-acid sequence, 242 residues long: Orotidine 5'-phosphate decarboxylase (242 aa).

Substrate contacts are provided by residues D22, K44, 71 to 80, T130, R190, Q199, G219, and R220; that span reads DLKYHDIPNT. Residue K73 is the Proton donor of the active site.

It belongs to the OMP decarboxylase family. Type 1 subfamily. Homodimer.

It carries out the reaction orotidine 5'-phosphate + H(+) = UMP + CO2. Its pathway is pyrimidine metabolism; UMP biosynthesis via de novo pathway; UMP from orotate: step 2/2. Its function is as follows. Catalyzes the decarboxylation of orotidine 5'-monophosphate (OMP) to uridine 5'-monophosphate (UMP). This Laribacter hongkongensis (strain HLHK9) protein is Orotidine 5'-phosphate decarboxylase.